The sequence spans 410 residues: Phosphoglycerate kinase (410 aa).

Substrate-binding positions include 19–21, Arg34, 57–60, Arg114, and Arg154; these read DLN and HQGK. ATP is bound by residues Glu332 and 358–361; that span reads GGHS.

Belongs to the phosphoglycerate kinase family. Homodimer.

Its subcellular location is the cytoplasm. The catalysed reaction is (2R)-3-phosphoglycerate + ATP = (2R)-3-phospho-glyceroyl phosphate + ADP. The protein operates within carbohydrate degradation; glycolysis; pyruvate from D-glyceraldehyde 3-phosphate: step 2/5. The protein is Phosphoglycerate kinase (pgk) of Pyrococcus abyssi (strain GE5 / Orsay).